A 327-amino-acid polypeptide reads, in one-letter code: Mitochondrial coenzyme A transporter SLC25A42 (327 aa).

Solcar repeat units lie at residues 34 to 120 (KSVL…YKKL), 132 to 217 (LTPI…LKKL), and 227 to 315 (PYTF…TQIL). 6 helical membrane passes run 36–56 (VLNS…AVAP), 92–112 (LWRG…IQFC), 138–158 (LLAG…LDLV), 192–209 (GFTP…ISFF), 233–253 (LLFG…LDVV), and 296–316 (VKGP…QILL).

The protein belongs to the mitochondrial carrier (TC 2.A.29) family.

Its subcellular location is the mitochondrion inner membrane. It catalyses the reaction ADP(out) + CoA(in) = ADP(in) + CoA(out). It carries out the reaction 3'-dephospho-CoA(in) + ADP(out) = 3'-dephospho-CoA(out) + ADP(in). The catalysed reaction is adenosine 3',5'-bisphosphate(in) + ADP(out) = adenosine 3',5'-bisphosphate(out) + ADP(in). The enzyme catalyses AMP(in) + ADP(out) = AMP(out) + ADP(in). It catalyses the reaction dADP(in) + ADP(out) = dADP(out) + ADP(in). It carries out the reaction ADP(in) + ATP(out) = ADP(out) + ATP(in). In terms of biological role, mitochondrial carrier mediating the transport of coenzyme A (CoA) in mitochondria in exchange for intramitochondrial (deoxy)adenine nucleotides and adenosine 3',5'-diphosphate. The polypeptide is Mitochondrial coenzyme A transporter SLC25A42 (slc25a42) (Xenopus laevis (African clawed frog)).